Consider the following 140-residue polypeptide: ATP synthase epsilon chain (140 aa).

This sequence belongs to the ATPase epsilon chain family. As to quaternary structure, F-type ATPases have 2 components, CF(1) - the catalytic core - and CF(0) - the membrane proton channel. CF(1) has five subunits: alpha(3), beta(3), gamma(1), delta(1), epsilon(1). CF(0) has three main subunits: a, b and c.

The protein localises to the cell inner membrane. Functionally, produces ATP from ADP in the presence of a proton gradient across the membrane. The sequence is that of ATP synthase epsilon chain from Bdellovibrio bacteriovorus (strain ATCC 15356 / DSM 50701 / NCIMB 9529 / HD100).